Here is a 145-residue protein sequence, read N- to C-terminus: Large ribosomal subunit protein uL15 (145 aa).

The segment at 1–50 (MRLNTLSPAAGSKPEKQRRGRGIGSGLGKTGGRGVKGQTSRSGGGKVRAG) is disordered. Residues 22–35 (GIGSGLGKTGGRGV) show a composition bias toward gly residues.

This sequence belongs to the universal ribosomal protein uL15 family. In terms of assembly, part of the 50S ribosomal subunit.

In terms of biological role, binds to the 23S rRNA. The protein is Large ribosomal subunit protein uL15 of Aeromonas salmonicida (strain A449).